A 292-amino-acid chain; its full sequence is GTP cyclohydrolase FolE2 (292 aa).

The protein belongs to the GTP cyclohydrolase IV family.

The enzyme catalyses GTP + H2O = 7,8-dihydroneopterin 3'-triphosphate + formate + H(+). It functions in the pathway cofactor biosynthesis; 7,8-dihydroneopterin triphosphate biosynthesis; 7,8-dihydroneopterin triphosphate from GTP: step 1/1. In terms of biological role, converts GTP to 7,8-dihydroneopterin triphosphate. The protein is GTP cyclohydrolase FolE2 of Staphylococcus saprophyticus subsp. saprophyticus (strain ATCC 15305 / DSM 20229 / NCIMB 8711 / NCTC 7292 / S-41).